The sequence spans 57 residues: Large ribosomal subunit protein bL32 (57 aa).

The protein belongs to the bacterial ribosomal protein bL32 family.

The chain is Large ribosomal subunit protein bL32 from Geobacillus kaustophilus (strain HTA426).